A 372-amino-acid polypeptide reads, in one-letter code: Geranylgeranyl pyrophosphate synthase 4 (372 aa).

The first 22 residues, 1–22, serve as a signal peptide directing secretion; that stretch reads MEAQNIFLYLLIVFLSLHFVFT. K121, R124, and H153 together coordinate isopentenyl diphosphate. 2 residues coordinate Mg(2+): D160 and D166. Residue R171 coordinates dimethylallyl diphosphate. An isopentenyl diphosphate-binding site is contributed by R172. Residues K257, T258, Q295, K312, and K322 each coordinate dimethylallyl diphosphate.

It belongs to the FPP/GGPP synthase family. Monomer. Requires Mg(2+) as cofactor. Faintly expressed in flowers. Expressed in roots and siliques.

It is found in the endoplasmic reticulum. It catalyses the reaction isopentenyl diphosphate + dimethylallyl diphosphate = (2E)-geranyl diphosphate + diphosphate. The catalysed reaction is isopentenyl diphosphate + (2E)-geranyl diphosphate = (2E,6E)-farnesyl diphosphate + diphosphate. It carries out the reaction isopentenyl diphosphate + (2E,6E)-farnesyl diphosphate = (2E,6E,10E)-geranylgeranyl diphosphate + diphosphate. It participates in isoprenoid biosynthesis; farnesyl diphosphate biosynthesis; farnesyl diphosphate from geranyl diphosphate and isopentenyl diphosphate: step 1/1. The protein operates within isoprenoid biosynthesis; geranyl diphosphate biosynthesis; geranyl diphosphate from dimethylallyl diphosphate and isopentenyl diphosphate: step 1/1. Its pathway is isoprenoid biosynthesis; geranylgeranyl diphosphate biosynthesis; geranylgeranyl diphosphate from farnesyl diphosphate and isopentenyl diphosphate: step 1/1. Catalyzes the trans-addition of the three molecules of isopentenyl diphosphate (IPP) onto dimethylallyl diphosphate (DMAPP) to form geranylgeranyl diphosphate. The chain is Geranylgeranyl pyrophosphate synthase 4 from Arabidopsis thaliana (Mouse-ear cress).